Reading from the N-terminus, the 142-residue chain is MVLSAADKTNVKAAWGKVGGNAGEFGAEALERMFLGFPTTKTYFPHFDLSHGSAQVKAHGKKVGDALTLAVGHLDDLPGALSNLSDLHAHKLRVDPVNFKLLSHCLLSTLAVHLPNDFTPAVHASLDKFLSTVSTVLTSKYR.

Residues 2–142 (VLSAADKTNV…VSTVLTSKYR (141 aa)) form the Globin domain. H59 provides a ligand contact to O2. H88 contributes to the heme b binding site.

It belongs to the globin family. As to quaternary structure, heterotetramer of two alpha chains and two beta chains. As to expression, red blood cells.

Involved in oxygen transport from the lung to the various peripheral tissues. In terms of biological role, hemopressin acts as an antagonist peptide of the cannabinoid receptor CNR1. Hemopressin-binding efficiently blocks cannabinoid receptor CNR1 and subsequent signaling. In Equus quagga burchellii (Burchell's zebra), this protein is Hemoglobin subunit alpha-2 (HBA2).